Consider the following 244-residue polypeptide: uncharacterized protein (244 aa).

Belongs to the MtxX family.

This is an uncharacterized protein from Methanocaldococcus jannaschii (strain ATCC 43067 / DSM 2661 / JAL-1 / JCM 10045 / NBRC 100440) (Methanococcus jannaschii).